The primary structure comprises 582 residues: MKSIILFVLSLLLILEKQAAVMGQKCGSKGQLPSGSSQFPRGQKGQHYSGQKDEQHTKSKGSFSIQHTYHVDVNDRDRTQKSQQYDLNAQHKMTKSKQHLGGSQELLNYKQEGRDHDKSKDHFHMIVIHHKGGQAHRGTQNPSQDQGNSPSGKGISSQYSNTNKRLWVHGLTKEQASASGAQKGRTQGGSQSSYVLQTEELVANKQQRETQNSPQNKGHYQNVVEMREEHSSKLQTSLHPAYQDRLQHGPKDIFTTQDELLVYNKNQHQTKNLNQDQEHGQKTHKISYQSSRTEERQLNCGEKSVQKDVSKGGISIQTEEKIHGKSQNQVTIHSQGQEHGHKENKMSYQSSSTEERHLNCGEKGIHKGVSKGSISIQTEEQIHGKSQNQVRIPSQAQEHGHKENKMSYQSSSTEERRLNCGEKGIHKGVSKGSISIQTEEQIHGKSQNQVRIPSQAQEHGHKENKMSYQSSSTEERRLNYGGKSMQKDVSQSSTSFHTEKLVEGKSQIQTPNPNQDQWSVQNAKGKSDQSAGREQDLLSHEQKGRHQQESSEARNIVITEHEVAYDDHLTQQYNEDRNPVST.

A signal peptide spans 1–23; the sequence is MKSIILFVLSLLLILEKQAAVMG. Disordered regions lie at residues 26–65, 132–159, 272–295, 318–358, 379–417, and 439–582; these read CGSK…SFSI, GGQA…SSQY, NLNQ…RTEE, TEEK…ERHL, EEQI…EERR, and EEQI…PVST. Composition is skewed to polar residues over residues 31–40 and 137–159; these read QLPSGSSQFP and RGTQ…SSQY. Over residues 325–335 the composition is skewed to polar residues; that stretch reads KSQNQVTIHSQ. The span at 336–345 shows a compositional bias: basic and acidic residues; that stretch reads GQEHGHKENK. Composition is skewed to polar residues over residues 379-397, 439-457, 487-496, and 506-524; these read EEQI…SQAQ, KDVSQSSTSF, and SQIQ…QNAK. Basic and acidic residues-rich tracts occupy residues 525–552 and 559–582; these read GKSD…ESSE and TEHE…PVST.

This sequence belongs to the semenogelin family. In terms of assembly, interacts with SERPINA5.

It is found in the secreted. Participates in the formation of a gel matrix (sperm coagulum) entrapping the accessory gland secretions and ejaculated spermatozoa. The polypeptide is Semenogelin-2 (SEMG2) (Hylobates lar (Lar gibbon)).